Here is a 205-residue protein sequence, read N- to C-terminus: Protein PAXX (205 aa).

In terms of domain architecture, PISA spans phenylalanine 39 to alanine 81. The residue at position 147 (threonine 147) is a Phosphothreonine. The segment covering threonine 147–glycine 159 has biased composition (polar residues). Residues threonine 147–threonine 205 form a disordered region. At serine 150 the chain carries Phosphoserine. The tract at residues serine 172–threonine 205 is mediates interaction with XRCC5/Ku80 and XRCC6/Ku70 and association with the non-homologous end joining core complex. The short motif at phenylalanine 191–threonine 205 is the XLM element.

This sequence belongs to the XRCC4-XLF family. PAXX subfamily. Homodimer. Interacts with the DNA-bound XRCC5/Ku80 and XRCC6/Ku70 heterodimer (Ku complex); the interaction is direct. Associated component of the non-homologous end joining (NHEJ) complex, composed of the core proteins PRKDC, LIG4, XRCC4, XRCC6/Ku70, XRCC5/Ku86 and NHEJ1/XLF. Interacts with POLL (DNA polymerase lambda); promoting POLL recruitment to double-strand breaks (DSBs) and stimulation of the end-filling activity of POLL. Post-translationally, phosphorylation may inhibit interaction with the DNA-bound XRCC5/Ku80 and XRCC6/Ku70 heterodimer (Ku complex).

The protein localises to the nucleus. It localises to the chromosome. In terms of biological role, non-essential DNA repair protein involved in DNA non-homologous end joining (NHEJ); participates in double-strand break (DSB) repair and V(D)J recombination. May act as a scaffold required for accumulation of the Ku heterodimer, composed of XRCC5/Ku80 and XRCC6/Ku70, at double-strand break sites and promote the assembly and/or stability of the NHEJ machinery. Involved in NHEJ by promoting the ligation of blunt-ended DNA ends. Together with NHEJ1/XLF, collaborates with DNA polymerase lambda (POLL) to promote joining of non-cohesive DNA ends. Constitutes a non-essential component of classical NHEJ: has a complementary but distinct function with NHEJ1/XLF in DNA repair. The sequence is that of Protein PAXX from Mus musculus (Mouse).